The chain runs to 235 residues: MRRGAPQDQELVGPGPPGRGSRGAPPPLGPVVPVLVFPPDLVFRADQRSGPRQLLTLYNPTGTALRFRVLCTAPAKYTVFDAEGYVKPQSCIDIVIRHVAPIPSHYDVQDRFRIELSEEGAEGRVVGRKDITSILRAPAYPLELQGQPDPAPRPGPPAGTPPPTARHFQEHPRQQLATSSFLLFLLTGIVSVAFLLLPLPDELGSQLPQVLHVSLGQKLVAAYVLGLLTMVFLRT.

2 disordered regions span residues 1 to 25 and 143 to 171; these read MRRGAPQDQELVGPGPPGRGSRGAP and ELQGQPDPAPRPGPPAGTPPPTARHFQEH. Positions 33 to 145 constitute an MSP domain; the sequence is PVLVFPPDLV…RAPAYPLELQ (113 aa). Positions 149 to 164 are enriched in pro residues; that stretch reads DPAPRPGPPAGTPPPT. 2 helical membrane-spanning segments follow: residues 180 to 200 and 213 to 233; these read SFLLFLLTGIVSVAFLLLPLP and VSLGQKLVAAYVLGLLTMVFL.

Its subcellular location is the membrane. The sequence is that of Motile sperm domain-containing protein 3 (MOSPD3) from Homo sapiens (Human).